The sequence spans 112 residues: Large ribosomal subunit protein uL24 (112 aa).

It belongs to the universal ribosomal protein uL24 family. As to quaternary structure, part of the 50S ribosomal subunit.

Its function is as follows. One of two assembly initiator proteins, it binds directly to the 5'-end of the 23S rRNA, where it nucleates assembly of the 50S subunit. Functionally, one of the proteins that surrounds the polypeptide exit tunnel on the outside of the subunit. The chain is Large ribosomal subunit protein uL24 from Desulfitobacterium hafniense (strain Y51).